The chain runs to 1058 residues: Leucine-rich repeat and coiled-coil domain-containing protein PF3D7_0703800 (1058 aa).

Basic residues predominate over residues 1 to 10 (MAIKKKKKET). The tract at residues 1–34 (MAIKKKKKETKSKDNNNDNLRNEKKSTNLENGKY) is disordered. Positions 11-34 (KSKDNNNDNLRNEKKSTNLENGKY) are enriched in basic and acidic residues. Positions 515–544 (LKQLYTFIKNYENNNDKLNIKSQIINKDKN) form a coiled coil. Over residues 641–661 (ENKDHLQHEEHTHEEEPKDAN) the composition is skewed to basic and acidic residues. 2 disordered regions span residues 641–665 (ENKD…GDMV) and 706–728 (NIED…ENMK). Residues 872-905 (NYDHTQENILKNKNNMEDQNNLLEQNIMTDQLQN) are a coiled coil.

This Plasmodium falciparum (isolate 3D7) protein is Leucine-rich repeat and coiled-coil domain-containing protein PF3D7_0703800.